Here is a 220-residue protein sequence, read N- to C-terminus: Ribose-5-phosphate isomerase A (220 aa).

Substrate contacts are provided by residues 25–28 (TGST), 80–83 (DGAD), and 93–96 (KGGG). Catalysis depends on Glu102, which acts as the Proton acceptor. Lys120 serves as a coordination point for substrate.

The protein belongs to the ribose 5-phosphate isomerase family. As to quaternary structure, homodimer.

It catalyses the reaction aldehydo-D-ribose 5-phosphate = D-ribulose 5-phosphate. It functions in the pathway carbohydrate degradation; pentose phosphate pathway; D-ribose 5-phosphate from D-ribulose 5-phosphate (non-oxidative stage): step 1/1. Functionally, catalyzes the reversible conversion of ribose-5-phosphate to ribulose 5-phosphate. The sequence is that of Ribose-5-phosphate isomerase A from Bacillus cereus (strain ZK / E33L).